A 75-amino-acid polypeptide reads, in one-letter code: Peptide Ctri9610 (75 aa).

Residues 1 to 22 (MNSKYLFVFLILNVIFIDLCQG) form the signal peptide. Lysine amide is present on Lys-41. Residues 42–75 (GTRRRELGSQYDYLQDFRKRELDLDDLLSKFPDY) constitute a propeptide that is removed on maturation.

The protein belongs to the non-disulfide-bridged peptide (NDBP) superfamily. Short antimicrobial peptide (group 4) family. In terms of tissue distribution, expressed by the venom gland.

The protein resides in the secreted. This chain is Peptide Ctri9610, found in Chaerilus tricostatus (Scorpion).